The primary structure comprises 309 residues: Aspartate carbamoyltransferase catalytic subunit (309 aa).

Carbamoyl phosphate contacts are provided by Arg-56 and Thr-57. Lys-84 is an L-aspartate binding site. Carbamoyl phosphate-binding residues include Arg-106, His-136, and Gln-139. Residues Arg-169 and Arg-221 each contribute to the L-aspartate site. Ala-264 and Pro-265 together coordinate carbamoyl phosphate.

It belongs to the aspartate/ornithine carbamoyltransferase superfamily. ATCase family. In terms of assembly, heterododecamer (2C3:3R2) of six catalytic PyrB chains organized as two trimers (C3), and six regulatory PyrI chains organized as three dimers (R2).

The enzyme catalyses carbamoyl phosphate + L-aspartate = N-carbamoyl-L-aspartate + phosphate + H(+). It functions in the pathway pyrimidine metabolism; UMP biosynthesis via de novo pathway; (S)-dihydroorotate from bicarbonate: step 2/3. Catalyzes the condensation of carbamoyl phosphate and aspartate to form carbamoyl aspartate and inorganic phosphate, the committed step in the de novo pyrimidine nucleotide biosynthesis pathway. This is Aspartate carbamoyltransferase catalytic subunit from Limosilactobacillus reuteri subsp. reuteri (strain JCM 1112) (Lactobacillus reuteri).